The chain runs to 304 residues: HPr kinase/phosphorylase (304 aa).

Residues His-136 and Lys-157 contribute to the active site. An ATP-binding site is contributed by 151-158; that stretch reads GESGIGKS. Ser-158 is a Mg(2+) binding site. Catalysis depends on Asp-175, which acts as the Proton acceptor; for phosphorylation activity. Proton donor; for dephosphorylation activity. Residues 198–207 are important for the catalytic mechanism of both phosphorylation and dephosphorylation; that stretch reads LEVRGIGIID. Glu-199 provides a ligand contact to Mg(2+). Arg-240 is a catalytic residue. Residues 261–266 are important for the catalytic mechanism of dephosphorylation; sequence PVRPGR.

This sequence belongs to the HPrK/P family. In terms of assembly, homohexamer. It depends on Mg(2+) as a cofactor.

The enzyme catalyses [HPr protein]-L-serine + ATP = [HPr protein]-O-phospho-L-serine + ADP + H(+). It carries out the reaction [HPr protein]-O-phospho-L-serine + phosphate + H(+) = [HPr protein]-L-serine + diphosphate. In terms of biological role, catalyzes the ATP- as well as the pyrophosphate-dependent phosphorylation of a specific serine residue in HPr, a phosphocarrier protein of the phosphoenolpyruvate-dependent sugar phosphotransferase system (PTS). HprK/P also catalyzes the pyrophosphate-producing, inorganic phosphate-dependent dephosphorylation (phosphorolysis) of seryl-phosphorylated HPr (P-Ser-HPr). The two antagonistic activities of HprK/P are regulated by several intracellular metabolites, which change their concentration in response to the absence or presence of rapidly metabolisable carbon sources (glucose, fructose, etc.) in the growth medium. Therefore, by controlling the phosphorylation state of HPr, HPrK/P is a sensor enzyme that plays a major role in the regulation of carbon metabolism and sugar transport: it mediates carbon catabolite repression (CCR), and regulates PTS-catalyzed carbohydrate uptake and inducer exclusion. In Clostridium botulinum (strain Eklund 17B / Type B), this protein is HPr kinase/phosphorylase.